A 149-amino-acid chain; its full sequence is Large ribosomal subunit protein uL15 (149 aa).

The span at 1–11 shows a compositional bias: basic and acidic residues; it reads MSDPIKLHDLR. The segment at 1–44 is disordered; sequence MSDPIKLHDLRPAPGAKKAKTRVGRGEASKGKTAGRGTKGTKAR.

It belongs to the universal ribosomal protein uL15 family. As to quaternary structure, part of the 50S ribosomal subunit.

In terms of biological role, binds to the 23S rRNA. The polypeptide is Large ribosomal subunit protein uL15 (Corynebacterium jeikeium (strain K411)).